The chain runs to 188 residues: Elongation factor P (188 aa).

At lysine 34 the chain carries N6-(3,6-diaminohexanoyl)-5-hydroxylysine.

The protein belongs to the elongation factor P family. May be beta-lysylated on the epsilon-amino group of Lys-34 by the combined action of EpmA and EpmB, and then hydroxylated on the C5 position of the same residue by EpmC (if this protein is present). Lysylation is critical for the stimulatory effect of EF-P on peptide-bond formation. The lysylation moiety may extend toward the peptidyltransferase center and stabilize the terminal 3-CCA end of the tRNA. Hydroxylation of the C5 position on Lys-34 may allow additional potential stabilizing hydrogen-bond interactions with the P-tRNA.

The protein resides in the cytoplasm. Its pathway is protein biosynthesis; polypeptide chain elongation. In terms of biological role, involved in peptide bond synthesis. Alleviates ribosome stalling that occurs when 3 or more consecutive Pro residues or the sequence PPG is present in a protein, possibly by augmenting the peptidyl transferase activity of the ribosome. Modification of Lys-34 is required for alleviation. The protein is Elongation factor P of Aliivibrio fischeri (strain ATCC 700601 / ES114) (Vibrio fischeri).